The primary structure comprises 461 residues: Serine carboxypeptidase-like 51 (461 aa).

An N-terminal signal peptide occupies residues 1 to 20 (MKTTVVYLVILCLIVSCTNG). 2 N-linked (GlcNAc...) asparagine glycosylation sites follow: asparagine 99 and asparagine 152. Residue serine 166 is part of the active site. Asparagine 340 is a glycosylation site (N-linked (GlcNAc...) asparagine). Active-site residues include aspartate 379 and histidine 438.

It belongs to the peptidase S10 family. Expressed in seedlings, roots, flowers and siliques.

It is found in the secreted. Its function is as follows. Probable carboxypeptidase. The chain is Serine carboxypeptidase-like 51 (SCPL51) from Arabidopsis thaliana (Mouse-ear cress).